The sequence spans 88 residues: Small ribosomal subunit protein bS20 (88 aa).

Residues 1-27 (MANSKSAKKRALQSEKRRQHNASRRSM) form a disordered region.

It belongs to the bacterial ribosomal protein bS20 family.

Its function is as follows. Binds directly to 16S ribosomal RNA. The sequence is that of Small ribosomal subunit protein bS20 from Shewanella loihica (strain ATCC BAA-1088 / PV-4).